Consider the following 1320-residue polypeptide: Bifunctional protein PutA (1320 aa).

The segment at 228–574 (LSRSLNRIIG…SFVNRIADTS (347 aa)) is proline dehydrogenase. The tract at residues 653-1119 (QPVAAGEMSP…LANRPESALA (467 aa)) is aldehyde dehydrogenase. Residues glutamate 883 and cysteine 917 contribute to the active site.

The protein in the N-terminal section; belongs to the proline dehydrogenase family. This sequence in the C-terminal section; belongs to the aldehyde dehydrogenase family. In terms of assembly, homodimer. Requires FAD as cofactor.

It carries out the reaction L-proline + a quinone = (S)-1-pyrroline-5-carboxylate + a quinol + H(+). The catalysed reaction is L-glutamate 5-semialdehyde + NAD(+) + H2O = L-glutamate + NADH + 2 H(+). It participates in amino-acid degradation; L-proline degradation into L-glutamate; L-glutamate from L-proline: step 1/2. It functions in the pathway amino-acid degradation; L-proline degradation into L-glutamate; L-glutamate from L-proline: step 2/2. Functionally, oxidizes proline to glutamate for use as a carbon and nitrogen source and also function as a transcriptional repressor of the put operon. This is Bifunctional protein PutA (putA) from Escherichia coli (strain K12).